The chain runs to 411 residues: Alpha-1-antiproteinase (411 aa).

The first 24 residues, 1–24, serve as a signal peptide directing secretion; it reads MAPSISRGLLLLAALCCLAPSFLA. Residue Ser-33 is modified to Phosphoserine. 3 N-linked (GlcNAc...) asparagine glycosylation sites follow: Asn-64, Asn-101, and Asn-265. Residues 367–386 are RCL; that stretch reads GATVVEAVPMSLPPQVKFDH. Ser-377 is modified (phosphoserine).

It belongs to the serpin family. As to quaternary structure, interacts with CELA2A. Interacts with ERGIC3 and LMAN1/ERGIC53. Interacts with PRSS1/Trypsin. In terms of tissue distribution, plasma.

It localises to the secreted. Its function is as follows. Inhibitor of serine proteases. The primary target is elastase, but also has a moderate affinity for plasmin and thrombin. The sequence is that of Alpha-1-antiproteinase (Serpina1) from Rattus norvegicus (Rat).